The chain runs to 114 residues: UPF0342 protein LCABL_19440 (114 aa).

It belongs to the UPF0342 family.

The polypeptide is UPF0342 protein LCABL_19440 (Lacticaseibacillus casei (strain BL23) (Lactobacillus casei)).